A 577-amino-acid polypeptide reads, in one-letter code: Arginine--tRNA ligase (577 aa).

The 'HIGH' region signature appears at 122 to 132 (PNVAKEMHVGH).

It belongs to the class-I aminoacyl-tRNA synthetase family. As to quaternary structure, monomer.

It localises to the cytoplasm. The enzyme catalyses tRNA(Arg) + L-arginine + ATP = L-arginyl-tRNA(Arg) + AMP + diphosphate. This is Arginine--tRNA ligase from Salmonella paratyphi A (strain ATCC 9150 / SARB42).